The primary structure comprises 155 residues: UPF0060 membrane protein MA_3936 (155 aa).

Transmembrane regions (helical) follow at residues 8–28 (LCPF…ICLW), 35–55 (AVFG…PTFQ), and 62–82 (VYAA…LFVD).

This sequence belongs to the UPF0060 family.

It localises to the cell membrane. This is UPF0060 membrane protein MA_3936 from Methanosarcina acetivorans (strain ATCC 35395 / DSM 2834 / JCM 12185 / C2A).